A 668-amino-acid polypeptide reads, in one-letter code: Kelch repeat-containing protein ARB_01230 (668 aa).

The first 32 residues, methionine 1 to histidine 32, serve as a signal peptide directing secretion. At alanine 33 to alanine 522 the chain is on the extracellular side. Asparagine 60 carries an N-linked (GlcNAc...) asparagine glycan. 2 Kelch repeats span residues threonine 62–aspartate 108 and serine 125–proline 176. Asparagine 251 and asparagine 291 each carry an N-linked (GlcNAc...) asparagine glycan. Kelch repeat units follow at residues isoleucine 283–alanine 331, glutamine 340–serine 395, glutamine 396–threonine 445, and valine 463–alanine 509. The chain crosses the membrane as a helical span at residues alanine 523 to valine 543. Topologically, residues threonine 544–glutamine 668 are cytoplasmic. The disordered stretch occupies residues aspartate 611–glutamate 642.

The protein localises to the membrane. The protein resides in the secreted. This is Kelch repeat-containing protein ARB_01230 from Arthroderma benhamiae (strain ATCC MYA-4681 / CBS 112371) (Trichophyton mentagrophytes).